We begin with the raw amino-acid sequence, 167 residues long: NAD(P)H-quinone oxidoreductase subunit I, chloroplastic (167 aa).

2 4Fe-4S ferredoxin-type domains span residues 55–84 and 95–124; these read GRIHFEFDKCIACEVCVRVCPIDLPVVDWK and LNYSIDFGICIFCGNCVEYCPTNCLSMTEE. C64, C67, C70, C74, C104, C107, C110, and C114 together coordinate [4Fe-4S] cluster.

This sequence belongs to the complex I 23 kDa subunit family. In terms of assembly, NDH is composed of at least 16 different subunits, 5 of which are encoded in the nucleus. Requires [4Fe-4S] cluster as cofactor.

It localises to the plastid. It is found in the chloroplast thylakoid membrane. The catalysed reaction is a plastoquinone + NADH + (n+1) H(+)(in) = a plastoquinol + NAD(+) + n H(+)(out). The enzyme catalyses a plastoquinone + NADPH + (n+1) H(+)(in) = a plastoquinol + NADP(+) + n H(+)(out). Its function is as follows. NDH shuttles electrons from NAD(P)H:plastoquinone, via FMN and iron-sulfur (Fe-S) centers, to quinones in the photosynthetic chain and possibly in a chloroplast respiratory chain. The immediate electron acceptor for the enzyme in this species is believed to be plastoquinone. Couples the redox reaction to proton translocation, and thus conserves the redox energy in a proton gradient. In Morus indica (Mulberry), this protein is NAD(P)H-quinone oxidoreductase subunit I, chloroplastic.